Reading from the N-terminus, the 684-residue chain is Probable pectin methyltransferase QUA2 (684 aa).

The interval Met-1–Ser-35 is disordered. Residues Met-1–Lys-86 lie on the Cytoplasmic side of the membrane. The segment covering Asp-19–Ser-35 has biased composition (basic and acidic residues). A helical; Signal-anchor for type II membrane protein membrane pass occupies residues Ile-87–Ile-107. The Lumenal segment spans residues Ser-108–Ile-684. Residues Asn-161 and Asn-476 are each glycosylated (N-linked (GlcNAc...) asparagine).

This sequence belongs to the methyltransferase superfamily. Ubiquitous.

The protein resides in the golgi apparatus membrane. The protein operates within glycan metabolism; pectin biosynthesis. In terms of biological role, may be involved in the synthesis of homogalacturonan. Required for normal cell adhesion and plant development. In Arabidopsis thaliana (Mouse-ear cress), this protein is Probable pectin methyltransferase QUA2 (QUA2).